The primary structure comprises 208 residues: Uracil phosphoribosyltransferase (208 aa).

5-phospho-alpha-D-ribose 1-diphosphate is bound by residues Arg-78, Arg-103, and Asp-130 to Ser-138. Uracil is bound by residues Ile-193 and Gly-198–Ala-200. Asp-199 is a 5-phospho-alpha-D-ribose 1-diphosphate binding site.

The protein belongs to the UPRTase family. It depends on Mg(2+) as a cofactor.

The catalysed reaction is UMP + diphosphate = 5-phospho-alpha-D-ribose 1-diphosphate + uracil. Its pathway is pyrimidine metabolism; UMP biosynthesis via salvage pathway; UMP from uracil: step 1/1. Allosterically activated by GTP. Its function is as follows. Catalyzes the conversion of uracil and 5-phospho-alpha-D-ribose 1-diphosphate (PRPP) to UMP and diphosphate. In Glaesserella parasuis serovar 5 (strain SH0165) (Haemophilus parasuis), this protein is Uracil phosphoribosyltransferase.